Here is a 665-residue protein sequence, read N- to C-terminus: ATPase WRNIP1 (665 aa).

The UBZ4-type zinc finger occupies 17–44; the sequence is QVQCPVCQQMMPAAHINSHLDRCLLLHP. 5 residues coordinate Zn(2+): Cys-20, Cys-23, His-31, His-35, and Cys-39. The disordered stretch occupies residues 48–190; that stretch reads AEPAAGSHRA…DGEDDPGHWD (143 aa). Residues Ser-65 and Ser-75 each carry the phosphoserine modification. A compositionally biased stretch (polar residues) spans 76-89; sequence ESSALKQPATPTAA. A Glycyl lysine isopeptide (Lys-Gly) (interchain with G-Cter in ubiquitin) cross-link involves residue Lys-81. A Phosphothreonine modification is found at Thr-85. Ser-91 and Ser-92 each carry phosphoserine. The segment covering 92–104 has biased composition (acidic residues); the sequence is SEGEGEEGDDGGE. Residue Thr-116 is modified to Phosphothreonine. Low complexity predominate over residues 130 to 155; the sequence is RSSSPGRKGSGKRPAAAAAAGSASPR. At Ser-139 the chain carries Phosphoserine. Residue Lys-141 forms a Glycyl lysine isopeptide (Lys-Gly) (interchain with G-Cter in ubiquitin) linkage. Residue Ser-153 is modified to Phosphoserine. Over residues 159–184 the composition is skewed to acidic residues; the sequence is EAEAQEEEEAVGDGDGDGDADADGED. Lys-225 is covalently cross-linked (Glycyl lysine isopeptide (Lys-Gly) (interchain with G-Cter in ubiquitin)). Residue 270–276 participates in ATP binding; sequence PGCGKTT. Glycyl lysine isopeptide (Lys-Gly) (interchain with G-Cter in ubiquitin) cross-links involve residues Lys-301, Lys-310, Lys-316, Lys-322, and Lys-335. Lys-482 participates in a covalent cross-link: Glycyl lysine isopeptide (Lys-Gly) (interchain with G-Cter in SUMO2); alternate. Lys-482 is covalently cross-linked (Glycyl lysine isopeptide (Lys-Gly) (interchain with G-Cter in ubiquitin); alternate). Residues Tyr-534 and Tyr-562 each carry the phosphotyrosine modification. Lys-627 is covalently cross-linked (Glycyl lysine isopeptide (Lys-Gly) (interchain with G-Cter in ubiquitin)). A Glycyl lysine isopeptide (Lys-Gly) (interchain with G-Cter in ubiquitin); alternate cross-link involves residue Lys-633. Position 633 is an N6-acetyllysine; alternate (Lys-633). Lys-636 is covalently cross-linked (Glycyl lysine isopeptide (Lys-Gly) (interchain with G-Cter in ubiquitin)).

This sequence belongs to the AAA ATPase family. RarA/MGS1/WRNIP1 subfamily. In terms of assembly, forms homooligomers, possibly octamers. Directly interacts with POLD1, POLD2 and POLD4. Interacts with the N-terminal domain of WRN. Interacts (via UBZ4-type zinc finger) with monoubiquitin and polyubiquitin. Interacts with TRIM14 and PPP6C; these interactions positively regulate the RIGI signaling pathway. In terms of processing, sumoylated with SUMO1 and SUMO2/3. Ubiquitously expressed.

The protein localises to the nucleus. Its subcellular location is the cytoplasm. It catalyses the reaction ATP + H2O = ADP + phosphate + H(+). Its function is as follows. Functions as a modulator of initiation or reinitiation events during DNA polymerase delta-mediated DNA synthesis. In the presence of ATP, stimulation of DNA polymerase delta-mediated DNA synthesis is decreased. Also plays a role in the innate immune defense against viruses. Stabilizes the RIGI dsRNA interaction and promotes RIGI 'Lys-63'-linked polyubiquitination. In turn, RIGI transmits the signal through mitochondrial MAVS. This Homo sapiens (Human) protein is ATPase WRNIP1.